The sequence spans 279 residues: Shikimate dehydrogenase (NADP(+)) (279 aa).

Residues 19–21 (SRS) and Thr-66 each bind shikimate. The active-site Proton acceptor is the Lys-70. Asn-91 and Asp-106 together coordinate shikimate. NADP(+)-binding positions include 129-133 (GAGGA) and Phe-222. Tyr-224 contacts shikimate. Gly-243 lines the NADP(+) pocket.

This sequence belongs to the shikimate dehydrogenase family. Homodimer.

The enzyme catalyses shikimate + NADP(+) = 3-dehydroshikimate + NADPH + H(+). It participates in metabolic intermediate biosynthesis; chorismate biosynthesis; chorismate from D-erythrose 4-phosphate and phosphoenolpyruvate: step 4/7. Involved in the biosynthesis of the chorismate, which leads to the biosynthesis of aromatic amino acids. Catalyzes the reversible NADPH linked reduction of 3-dehydroshikimate (DHSA) to yield shikimate (SA). The sequence is that of Shikimate dehydrogenase (NADP(+)) from Anaeromyxobacter sp. (strain Fw109-5).